The primary structure comprises 116 residues: Ribosome-binding factor A (116 aa).

It belongs to the RbfA family. Monomer. Binds 30S ribosomal subunits, but not 50S ribosomal subunits or 70S ribosomes.

The protein resides in the cytoplasm. Functionally, one of several proteins that assist in the late maturation steps of the functional core of the 30S ribosomal subunit. Associates with free 30S ribosomal subunits (but not with 30S subunits that are part of 70S ribosomes or polysomes). Required for efficient processing of 16S rRNA. May interact with the 5'-terminal helix region of 16S rRNA. The polypeptide is Ribosome-binding factor A (Clostridium botulinum (strain Eklund 17B / Type B)).